The sequence spans 101 residues: MDPVDPRLEPWKHPGSQPKAACTSCYCKKCCFHCQVCFTTKGLGISYGRKKRRQRRRAPQDSQTHQVSLPKQPASQARGDPTGPKESKKKVERETETDPVD.

The span at 1 to 12 (MDPVDPRLEPWK) shows a compositional bias: basic and acidic residues. Residues 1-20 (MDPVDPRLEPWKHPGSQPKA) are disordered. An interaction with human CREBBP region spans residues 1–24 (MDPVDPRLEPWKHPGSQPKAACTS). The segment at 1–48 (MDPVDPRLEPWKHPGSQPKAACTSCYCKKCCFHCQVCFTTKGLGISYG) is transactivation. Cys22, Cys25, and Cys27 together coordinate Zn(2+). The interval 22–37 (CTSCYCKKCCFHCQVC) is cysteine-rich. Lys28 carries the N6-acetyllysine; by host PCAF modification. Residues Cys30, His33, Cys34, and Cys37 each coordinate Zn(2+). Positions 38 to 48 (FTTKGLGISYG) are core. Residues 48–57 (GRKKRRQRRR) show a composition bias toward basic residues. The disordered stretch occupies residues 48-101 (GRKKRRQRRRAPQDSQTHQVSLPKQPASQARGDPTGPKESKKKVERETETDPVD). The Nuclear localization signal, RNA-binding (TAR), and protein transduction motif lies at 49-57 (RKKRRQRRR). The segment at 49 to 86 (RKKRRQRRRAPQDSQTHQVSLPKQPASQARGDPTGPKE) is interaction with the host capping enzyme RNGTT. Lys50 and Lys51 each carry N6-acetyllysine; by host EP300 and GCN5L2. Asymmetric dimethylarginine; by host PRMT6 occurs at positions 52 and 53. Positions 60–75 (QDSQTHQVSLPKQPAS) are enriched in polar residues. Lys71 is covalently cross-linked (Glycyl lysine isopeptide (Lys-Gly) (interchain with G-Cter in ubiquitin)). A Cell attachment site motif is present at residues 78-80 (RGD). The segment covering 83–101 (GPKESKKKVERETETDPVD) has biased composition (basic and acidic residues).

This sequence belongs to the lentiviruses Tat family. Interacts with host CCNT1. Associates with the P-TEFb complex composed at least of Tat, P-TEFb (CDK9 and CCNT1), TAR RNA, RNA Pol II. Recruits the HATs CREBBP, TAF1/TFIID, EP300, PCAF and GCN5L2. Interacts with host KAT5/Tip60; this interaction targets the latter to degradation. Interacts with the host deacetylase SIRT1. Interacts with host capping enzyme RNGTT; this interaction stimulates RNGTT. Binds to host KDR, and to the host integrins ITGAV/ITGB3 and ITGA5/ITGB1. Interacts with host KPNB1/importin beta-1 without previous binding to KPNA1/importin alpha-1. Interacts with EIF2AK2. Interacts with host nucleosome assembly protein NAP1L1; this interaction may be required for the transport of Tat within the nucleus, since the two proteins interact at the nuclear rim. Interacts with host C1QBP/SF2P32; this interaction involves lysine-acetylated Tat. Interacts with the host chemokine receptors CCR2, CCR3 and CXCR4. Interacts with host DPP4/CD26; this interaction may trigger an anti-proliferative effect. Interacts with host LDLR. Interacts with the host extracellular matrix metalloproteinase MMP1. Interacts with host PRMT6; this interaction mediates Tat's methylation. Interacts with, and is ubiquitinated by MDM2/Hdm2. Interacts with host PSMC3 and HTATIP2. Interacts with STAB1; this interaction may overcome SATB1-mediated repression of IL2 and IL2RA (interleukin) in T cells by binding to the same domain than HDAC1. Interacts (when acetylated) with human CDK13, thereby increasing HIV-1 mRNA splicing and promoting the production of the doubly spliced HIV-1 protein Nef. Interacts with host TBP; this interaction modulates the activity of transcriptional pre-initiation complex. Interacts with host RELA. Interacts with host PLSCR1; this interaction negatively regulates Tat transactivation activity by altering its subcellular distribution. Post-translationally, asymmetrical arginine methylation by host PRMT6 seems to diminish the transactivation capacity of Tat and affects the interaction with host CCNT1. Acetylation by EP300, CREBBP, GCN5L2/GCN5 and PCAF regulates the transactivation activity of Tat. EP300-mediated acetylation of Lys-50 promotes dissociation of Tat from the TAR RNA through the competitive binding to PCAF's bromodomain. In addition, the non-acetylated Tat's N-terminus can also interact with PCAF. PCAF-mediated acetylation of Lys-28 enhances Tat's binding to CCNT1. Lys-50 is deacetylated by SIRT1. In terms of processing, polyubiquitination by host MDM2 does not target Tat to degradation, but activates its transactivation function and fosters interaction with CCNT1 and TAR RNA. Post-translationally, phosphorylated by EIF2AK2 on serine and threonine residues adjacent to the basic region important for TAR RNA binding and function. Phosphorylation of Tat by EIF2AK2 is dependent on the prior activation of EIF2AK2 by dsRNA.

The protein resides in the host nucleus. It localises to the host nucleolus. Its subcellular location is the host cytoplasm. The protein localises to the secreted. Functionally, transcriptional activator that increases RNA Pol II processivity, thereby increasing the level of full-length viral transcripts. Recognizes a hairpin structure at the 5'-LTR of the nascent viral mRNAs referred to as the transactivation responsive RNA element (TAR) and recruits the cyclin T1-CDK9 complex (P-TEFb complex) that will in turn hyperphosphorylate the RNA polymerase II to allow efficient elongation. The CDK9 component of P-TEFb and other Tat-activated kinases hyperphosphorylate the C-terminus of RNA Pol II that becomes stabilized and much more processive. Other factors such as HTATSF1/Tat-SF1, SUPT5H/SPT5, and HTATIP2 are also important for Tat's function. Besides its effect on RNA Pol II processivity, Tat induces chromatin remodeling of proviral genes by recruiting the histone acetyltransferases (HATs) CREBBP, EP300 and PCAF to the chromatin. This also contributes to the increase in proviral transcription rate, especially when the provirus integrates in transcriptionally silent region of the host genome. To ensure maximal activation of the LTR, Tat mediates nuclear translocation of NF-kappa-B by interacting with host RELA. Through its interaction with host TBP, Tat may also modulate transcription initiation. Tat can reactivate a latently infected cell by penetrating in it and transactivating its LTR promoter. In the cytoplasm, Tat is thought to act as a translational activator of HIV-1 mRNAs. Its function is as follows. Extracellular circulating Tat can be endocytosed by surrounding uninfected cells via the binding to several surface receptors such as CD26, CXCR4, heparan sulfate proteoglycans (HSPG) or LDLR. Neurons are rarely infected, but they internalize Tat via their LDLR. Through its interaction with nuclear HATs, Tat is potentially able to control the acetylation-dependent cellular gene expression. Modulates the expression of many cellular genes involved in cell survival, proliferation or in coding for cytokines or cytokine receptors. Tat plays a role in T-cell and neurons apoptosis. Tat induced neurotoxicity and apoptosis probably contribute to neuroAIDS. Circulating Tat also acts as a chemokine-like and/or growth factor-like molecule that binds to specific receptors on the surface of the cells, affecting many cellular pathways. In the vascular system, Tat binds to ITGAV/ITGB3 and ITGA5/ITGB1 integrins dimers at the surface of endothelial cells and competes with bFGF for heparin-binding sites, leading to an excess of soluble bFGF. This Homo sapiens (Human) protein is Protein Tat.